Reading from the N-terminus, the 61-residue chain is Large ribosomal subunit protein bL28 (61 aa).

The disordered stretch occupies residues 1-26 (MAKDYVTGKRTHFGNTRSHALNHSRR).

Belongs to the bacterial ribosomal protein bL28 family.

In Lactiplantibacillus plantarum (strain ATCC BAA-793 / NCIMB 8826 / WCFS1) (Lactobacillus plantarum), this protein is Large ribosomal subunit protein bL28.